Consider the following 141-residue polypeptide: ATP synthase epsilon chain (141 aa).

This sequence belongs to the ATPase epsilon chain family. In terms of assembly, F-type ATPases have 2 components, CF(1) - the catalytic core - and CF(0) - the membrane proton channel. CF(1) has five subunits: alpha(3), beta(3), gamma(1), delta(1), epsilon(1). CF(0) has three main subunits: a, b and c.

It localises to the cell inner membrane. Its function is as follows. Produces ATP from ADP in the presence of a proton gradient across the membrane. The polypeptide is ATP synthase epsilon chain (Dechloromonas aromatica (strain RCB)).